Reading from the N-terminus, the 156-residue chain is Small ribosomal subunit protein uS7 (156 aa).

The protein belongs to the universal ribosomal protein uS7 family. As to quaternary structure, part of the 30S ribosomal subunit. Contacts proteins S9 and S11.

In terms of biological role, one of the primary rRNA binding proteins, it binds directly to 16S rRNA where it nucleates assembly of the head domain of the 30S subunit. Is located at the subunit interface close to the decoding center, probably blocks exit of the E-site tRNA. This Aeromonas salmonicida (strain A449) protein is Small ribosomal subunit protein uS7.